A 388-amino-acid chain; its full sequence is Dipeptidase verJ (388 aa).

His-29, Asp-31, and Glu-142 together coordinate Zn(2+). His-169, Arg-243, and Asp-300 together coordinate substrate.

It belongs to the metallo-dependent hydrolases superfamily. Peptidase M19 family. Zn(2+) serves as cofactor.

It catalyses the reaction an L-aminoacyl-L-amino acid + H2O = 2 an L-alpha-amino acid. It participates in mycotoxin biosynthesis. In terms of biological role, dipeptidase; part of the gene cluster that mediates the biosynthesis of 11'-deoxyverticillin A, one of the dimeric epipolythiodioxopiperazines (ETPs) from the verticillin family that act as mycotoxins. 11'-deoxyverticillin A is required for normal conidiation. The nonribosomal peptide synthetase verP is speculated to be responsible for condensation of amino acids to form the carbon skeleton of verticillin, whereas the cluster-specific tailoring enzymes are involved in further modifications leading to the production of 11'-deoxyverticillin A. In Clonostachys rogersoniana, this protein is Dipeptidase verJ.